The chain runs to 1032 residues: Kinesin heavy chain isoform 5A (1032 aa).

Ala-2 bears the N-acetylalanine mark. Residues 9 to 327 (SIKVLCRFRP…LMFGQRAKTI (319 aa)) form the Kinesin motor domain. Position 86 to 93 (86 to 93 (GQTSSGKT)) interacts with ATP. A microtubule-binding region spans residues 174–315 (VSSPEEILDV…PSSYNDAETK (142 aa)). Residues 271-361 (EGTKSYVPYR…KTKAQKETIA (91 aa)) form a necessary for interaction with ZFYVE27 region. Residues 331 to 906 (ASVNLELTAE…VDRIKEAVRY (576 aa)) are a coiled coil. Residues 353–1032 (TKAQKETIAK…FPLHQETAAS (680 aa)) form an interaction with BICD2 region. Thr-397 carries the post-translational modification Phosphothreonine. Disordered regions lie at residues 906-939 (YKSS…YGTR) and 978-1010 (SGAT…RSDL). The tract at residues 907 to 1032 (KSSGKRGHSA…FPLHQETAAS (126 aa)) is globular. Residues 978-989 (SGATSSGGPLAS) show a composition bias toward low complexity. Over residues 991–1003 (QKANMDNGNATDI) the composition is skewed to polar residues.

It belongs to the TRAFAC class myosin-kinesin ATPase superfamily. Kinesin family. Kinesin subfamily. Oligomer composed of two heavy chains and two light chains. Interacts with GRIP1. Interacts with FMR1 (via C-terminus); this interaction is increased in a mGluR-dependent manner. Interacts with ZFYVE27. Interacts with VAPA, VAPB, SURF4, RAB11A (GDP-bound form), RAB11B (GDP-bound form) and RTN3 in a ZFYVE27-dependent manner. Interacts with BORCS5. Interacts with BICD2. Interacts with DTNB. In terms of tissue distribution, distributed throughout the CNS but is highly enriched in subsets of neurons.

The protein resides in the cytoplasm. It localises to the perinuclear region. It is found in the cytoskeleton. Its subcellular location is the perikaryon. The catalysed reaction is ATP + H2O + a kinesin associated with a microtubule at position (n) = ADP + phosphate a kinesin associated with a microtubule at position (n+1, toward the plus end).. In terms of biological role, microtubule-dependent motor required for slow axonal transport of neurofilament proteins (NFH, NFM and NFL). Can induce formation of neurite-like membrane protrusions in non-neuronal cells in a ZFYVE27-dependent manner. The ZFYVE27-KIF5A complex contributes to the vesicular transport of VAPA, VAPB, SURF4, RAB11A, RAB11B and RTN3 proteins in neurons. Required for anterograde axonal transportation of MAPK8IP3/JIP3 which is essential for MAPK8IP3/JIP3 function in axon elongation. The chain is Kinesin heavy chain isoform 5A from Homo sapiens (Human).